Consider the following 84-residue polypeptide: Elongation factor 1-beta (84 aa).

The protein belongs to the EF-1-beta/EF-1-delta family.

In terms of biological role, promotes the exchange of GDP for GTP in EF-1-alpha/GDP, thus allowing the regeneration of EF-1-alpha/GTP that could then be used to form the ternary complex EF-1-alpha/GTP/AAtRNA. This Methanoculleus marisnigri (strain ATCC 35101 / DSM 1498 / JR1) protein is Elongation factor 1-beta.